The sequence spans 352 residues: C-C chemokine receptor type 5 (352 aa).

Over 1-30 (MDYQVSSPTYDIDYYTSEPCQKINVKQIAA) the chain is Extracellular. Y3 carries the post-translational modification Sulfotyrosine. 2 O-linked (GalNAc...) serine glycosylation sites follow: S6 and S7. Sulfotyrosine occurs at positions 10, 14, and 15. 2 disulfide bridges follow: C20-C269 and C101-C178. The chain crosses the membrane as a helical span at residues 31 to 58 (RLLPPLYSLVFIFGFVGNMLVILILINC). Residues 59 to 68 (KRLKSMTDIY) lie on the Cytoplasmic side of the membrane. Residues 69–89 (LLNLAISDLFFLLTVPFWAHY) traverse the membrane as a helical segment. Topologically, residues 90–102 (AAAQWDFGNTMCQ) are extracellular. Residues 103-124 (LLTGLYFIGFFSGIFFIILLTI) traverse the membrane as a helical segment. Topologically, residues 125 to 141 (DRYLAIVHAVFALKART) are cytoplasmic. The chain crosses the membrane as a helical span at residues 142–166 (VTFGVVTSVITWVVAVFASLPGIIF). Topologically, residues 167–198 (TRSQKEGLHYTCSSHFPYSQYQFWKNFQTLKI) are extracellular. Residues 199 to 218 (VILGLVLPLLVMVICYSGIL) traverse the membrane as a helical segment. The Cytoplasmic portion of the chain corresponds to 219–235 (KTLLRCRNEKKRHRAVR). A helical membrane pass occupies residues 236–260 (LIFTIMIVYFLFWAPYNIVLLLNTF). Residues 261-277 (QEFFGLNNCSSSNRLDQ) lie on the Extracellular side of the membrane. The helical transmembrane segment at 278 to 301 (AMQVTETLGMTHCCINPIIYAFVG) threads the bilayer. At 302 to 352 (EKFRNYLLVFFQKHIAKHFCKCCSIFQQEAPERASSVYTRSTGEQEISVGL) the chain is on the cytoplasmic side. Residues C321, C323, and C324 are each lipidated (S-palmitoyl cysteine). S336, S337, S342, and S349 each carry phosphoserine; by BARK1.

Belongs to the G-protein coupled receptor 1 family. As to quaternary structure, interacts with PRAF2. Efficient ligand binding to CCL3/MIP-1alpha and CCL4/MIP-1beta requires sulfation, O-glycosylation and sialic acid modifications. Glycosylation on Ser-6 is required for efficient binding of CCL4. Interacts with GRK2. Interacts with ARRB1 and ARRB2. Interacts with CNIH4. Interacts with S100A4; this interaction stimulates T-lymphocyte chemotaxis. Sulfated on at least 2 of the N-terminal tyrosines. Sulfation is required for efficient binding of the chemokines, CCL3 and CCL4. In terms of processing, palmitoylation in the C-terminal is important for cell surface expression. Post-translationally, phosphorylation on serine residues in the C-terminal is stimulated by binding CC chemokines especially by APO-RANTES. O-glycosylated, but not N-glycosylated. Ser-6 appears to be the major site even if Ser-7 may be also O-glycosylated. Also sialylated glycans present which contribute to chemokine binding. Thr-16 and Ser-17 may also be glycosylated and, if so, with small moieties such as a T-antigen.

It localises to the cell membrane. In terms of biological role, receptor for a number of inflammatory CC-chemokines including CCL3/MIP-1-alpha, CCL4/MIP-1-beta and RANTES and subsequently transduces a signal by increasing the intracellular calcium ion level. May play a role in the control of granulocytic lineage proliferation or differentiation. Participates in T-lymphocyte migration to the infection site by acting as a chemotactic receptor. The sequence is that of C-C chemokine receptor type 5 (CCR5) from Symphalangus syndactylus (Siamang).